The chain runs to 183 residues: Putative NAD(P)H nitroreductase YdjA (183 aa).

FMN-binding positions include 10 to 12 (RRS), Arg-35, and His-39. 121-126 (AAVAQG) is a binding site for NAD(+). FMN is bound at residue 131–133 (WRS).

The protein belongs to the nitroreductase family. In terms of assembly, homodimer. FMN serves as cofactor.

The polypeptide is Putative NAD(P)H nitroreductase YdjA (ydjA) (Escherichia coli O157:H7).